Reading from the N-terminus, the 261-residue chain is uncharacterized protein (261 aa).

One can recognise an HTH tetR-type domain in the interval Ser-15–Tyr-75. Positions Ser-38 to Phe-57 form a DNA-binding region, H-T-H motif. Residues Ala-234–Arg-261 are disordered. Over residues Arg-241 to Arg-261 the composition is skewed to low complexity.

This is an uncharacterized protein from Mycobacterium bovis (strain ATCC BAA-935 / AF2122/97).